A 190-amino-acid chain; its full sequence is Xanthine phosphoribosyltransferase (190 aa).

Xanthine contacts are provided by leucine 20 and asparagine 27. 5-phospho-alpha-D-ribose 1-diphosphate is bound at residue 128–132 (ANGKA). Residue lysine 156 coordinates xanthine.

It belongs to the purine/pyrimidine phosphoribosyltransferase family. Xpt subfamily. Homodimer.

The protein localises to the cytoplasm. The catalysed reaction is XMP + diphosphate = xanthine + 5-phospho-alpha-D-ribose 1-diphosphate. The protein operates within purine metabolism; XMP biosynthesis via salvage pathway; XMP from xanthine: step 1/1. In terms of biological role, converts the preformed base xanthine, a product of nucleic acid breakdown, to xanthosine 5'-monophosphate (XMP), so it can be reused for RNA or DNA synthesis. In Stutzerimonas stutzeri (strain A1501) (Pseudomonas stutzeri), this protein is Xanthine phosphoribosyltransferase.